The following is a 257-amino-acid chain: DNA-binding and peroxide stress resistance protein YaaA (257 aa).

A Helix-hairpin-helix motif is present at residues 35 to 66 (IGIARKLSAPQIGKLMSISDKLADLNATRFHD).

The protein belongs to the UPF0246 family.

It is found in the cytoplasm. Its function is as follows. Protects bacteria from neutrophil-related defense upon infection of mammals. Binds DNA. The sequence is that of DNA-binding and peroxide stress resistance protein YaaA from Klebsiella pneumoniae subsp. pneumoniae (strain HS11286).